A 166-amino-acid polypeptide reads, in one-letter code: Large ribosomal subunit protein uL10 (166 aa).

It belongs to the universal ribosomal protein uL10 family. As to quaternary structure, part of the ribosomal stalk of the 50S ribosomal subunit. The N-terminus interacts with L11 and the large rRNA to form the base of the stalk. The C-terminus forms an elongated spine to which L12 dimers bind in a sequential fashion forming a multimeric L10(L12)X complex.

Forms part of the ribosomal stalk, playing a central role in the interaction of the ribosome with GTP-bound translation factors. In Bacillus pumilus (strain SAFR-032), this protein is Large ribosomal subunit protein uL10.